We begin with the raw amino-acid sequence, 259 residues long: Formate channel BtFdhC (259 aa).

Over 1–26 (MAFHKPEQIAELVIEAGVQKVSQTLP) the chain is Cytoplasmic. The helical transmembrane segment at 27–47 (AMLILGFLGGAFISLGFLLNI) threads the bilayer. The Periplasmic segment spans residues 48–66 (RVLGNLPERWGSLVNVLGG). The chain crosses the membrane as a helical span at residues 67–97 (AVFPVGLMLVVLAGGELITGNMMSLSMALYA). Topologically, residues 98 to 108 (KKITLVSVLNN) are cytoplasmic. A helical membrane pass occupies residues 109 to 130 (WVWITFMNFVGAIFVAYCFGHL). Residues 131-157 (GGLTEGDYLNKTVAIAEGKLHESFGRT) are Periplasmic-facing. The helical transmembrane segment at 158-176 (LILAIGCNWLVCLALWLAY) threads the bilayer. The Cytoplasmic portion of the chain corresponds to 177–187 (GTSDFVGKIIG). The chain crosses the membrane as a helical span at residues 188-216 (IWIPIMAFVVIGFQQVVANMFVISAVIFA). Residues 217 to 227 (GHLTWMDLARN) lie on the Periplasmic side of the membrane. The chain crosses the membrane as a helical span at residues 228–250 (FVPVFIGNVIGGAGFVGFAYFAC). Topologically, residues 251-259 (YQKQHSNMK) are cytoplasmic.

This sequence belongs to the FNT transporter (TC 1.A.16) family.

It localises to the cell inner membrane. The enzyme catalyses formate(in) = formate(out). Acts as a formate transporter. This chain is Formate channel BtFdhC, found in Bacillus thuringiensis.